The primary structure comprises 424 residues: Serine--tRNA ligase (424 aa).

233–235 (TAE) is a binding site for L-serine. 264–266 (RRE) serves as a coordination point for ATP. An L-serine-binding site is contributed by Glu287. 351-354 (EISS) is an ATP binding site. An L-serine-binding site is contributed by Ser386.

This sequence belongs to the class-II aminoacyl-tRNA synthetase family. Type-1 seryl-tRNA synthetase subfamily. In terms of assembly, homodimer. The tRNA molecule binds across the dimer.

It is found in the cytoplasm. The catalysed reaction is tRNA(Ser) + L-serine + ATP = L-seryl-tRNA(Ser) + AMP + diphosphate + H(+). The enzyme catalyses tRNA(Sec) + L-serine + ATP = L-seryl-tRNA(Sec) + AMP + diphosphate + H(+). It participates in aminoacyl-tRNA biosynthesis; selenocysteinyl-tRNA(Sec) biosynthesis; L-seryl-tRNA(Sec) from L-serine and tRNA(Sec): step 1/1. In terms of biological role, catalyzes the attachment of serine to tRNA(Ser). Is also able to aminoacylate tRNA(Sec) with serine, to form the misacylated tRNA L-seryl-tRNA(Sec), which will be further converted into selenocysteinyl-tRNA(Sec). The polypeptide is Serine--tRNA ligase (Pseudothermotoga lettingae (strain ATCC BAA-301 / DSM 14385 / NBRC 107922 / TMO) (Thermotoga lettingae)).